Consider the following 400-residue polypeptide: CCA-adding enzyme (400 aa).

ATP-binding residues include glycine 27 and arginine 30. CTP contacts are provided by glycine 27 and arginine 30. Residues aspartate 40 and aspartate 42 each contribute to the Mg(2+) site. The ATP site is built by arginine 111, aspartate 154, arginine 157, arginine 160, and arginine 163. Residues arginine 111, aspartate 154, arginine 157, arginine 160, and arginine 163 each contribute to the CTP site.

The protein belongs to the tRNA nucleotidyltransferase/poly(A) polymerase family. Bacterial CCA-adding enzyme type 3 subfamily. Homodimer. Requires Mg(2+) as cofactor.

It catalyses the reaction a tRNA precursor + 2 CTP + ATP = a tRNA with a 3' CCA end + 3 diphosphate. It carries out the reaction a tRNA with a 3' CCA end + 2 CTP + ATP = a tRNA with a 3' CCACCA end + 3 diphosphate. Its function is as follows. Catalyzes the addition and repair of the essential 3'-terminal CCA sequence in tRNAs without using a nucleic acid template. Adds these three nucleotides in the order of C, C, and A to the tRNA nucleotide-73, using CTP and ATP as substrates and producing inorganic pyrophosphate. tRNA 3'-terminal CCA addition is required both for tRNA processing and repair. Also involved in tRNA surveillance by mediating tandem CCA addition to generate a CCACCA at the 3' terminus of unstable tRNAs. While stable tRNAs receive only 3'-terminal CCA, unstable tRNAs are marked with CCACCA and rapidly degraded. This is CCA-adding enzyme from Bacillus pumilus (strain SAFR-032).